The sequence spans 119 residues: Ribonuclease P protein component (119 aa).

It belongs to the RnpA family. As to quaternary structure, consists of a catalytic RNA component (M1 or rnpB) and a protein subunit.

It catalyses the reaction Endonucleolytic cleavage of RNA, removing 5'-extranucleotides from tRNA precursor.. In terms of biological role, RNaseP catalyzes the removal of the 5'-leader sequence from pre-tRNA to produce the mature 5'-terminus. It can also cleave other RNA substrates such as 4.5S RNA. The protein component plays an auxiliary but essential role in vivo by binding to the 5'-leader sequence and broadening the substrate specificity of the ribozyme. The chain is Ribonuclease P protein component from Streptococcus equi subsp. equi (strain 4047).